Reading from the N-terminus, the 93-residue chain is Putative pterin-4-alpha-carbinolamine dehydratase (93 aa).

Belongs to the pterin-4-alpha-carbinolamine dehydratase family.

The enzyme catalyses (4aS,6R)-4a-hydroxy-L-erythro-5,6,7,8-tetrahydrobiopterin = (6R)-L-erythro-6,7-dihydrobiopterin + H2O. This Nostoc punctiforme (strain ATCC 29133 / PCC 73102) protein is Putative pterin-4-alpha-carbinolamine dehydratase.